The sequence spans 92 residues: Putative protein pog (92 aa).

In Acute bee paralysis virus (strain Rothamsted) (ABPV), this protein is Putative protein pog.